Reading from the N-terminus, the 488-residue chain is Putative BPI/LBP family protein At1g04970 (488 aa).

The N-terminal stretch at 1 to 24 (MDVGRCFLFLLLPSFFFLPSQTQS) is a signal peptide. N-linked (GlcNAc...) asparagine glycans are attached at residues asparagine 79, asparagine 109, asparagine 231, asparagine 242, and asparagine 341.

The protein belongs to the BPI/LBP/Plunc superfamily. BPI/LBP (TC 1.C.40) family.

The protein is Putative BPI/LBP family protein At1g04970 of Arabidopsis thaliana (Mouse-ear cress).